The following is a 362-amino-acid chain: Acetylglutamate kinase (362 aa).

Pro residues predominate over residues 1–11; that stretch reads MNAPTRTPPPS. A disordered region spans residues 1 to 42; that stretch reads MNAPTRTPPPSNGGHGSTGSTGSTGDAAPGGGTGRGPAATAR. Substrate-binding positions include 106–107, arginine 128, and asparagine 227; that span reads GG. The disordered stretch occupies residues 329–362; it reads MAESGTSPEPGTPPAPAARPAGIVPAGEPTGGTP. Residues 346–355 are compositionally biased toward low complexity; that stretch reads ARPAGIVPAG.

The protein belongs to the acetylglutamate kinase family. ArgB subfamily.

The protein localises to the cytoplasm. It catalyses the reaction N-acetyl-L-glutamate + ATP = N-acetyl-L-glutamyl 5-phosphate + ADP. It participates in amino-acid biosynthesis; L-arginine biosynthesis; N(2)-acetyl-L-ornithine from L-glutamate: step 2/4. Functionally, catalyzes the ATP-dependent phosphorylation of N-acetyl-L-glutamate. The protein is Acetylglutamate kinase of Frankia casuarinae (strain DSM 45818 / CECT 9043 / HFP020203 / CcI3).